Reading from the N-terminus, the 345-residue chain is Anthranilate phosphoribosyltransferase (345 aa).

Residues glycine 88, 91–92 (GD), threonine 96, 98–101 (NIST), 116–124 (KHGNRSASG), and serine 128 each bind 5-phospho-alpha-D-ribose 1-diphosphate. An anthranilate-binding site is contributed by glycine 88. Residue serine 100 participates in Mg(2+) binding. Asparagine 119 is a binding site for anthranilate. Arginine 174 is an anthranilate binding site. The Mg(2+) site is built by aspartate 233 and glutamate 234.

This sequence belongs to the anthranilate phosphoribosyltransferase family. In terms of assembly, homodimer. Requires Mg(2+) as cofactor.

It catalyses the reaction N-(5-phospho-beta-D-ribosyl)anthranilate + diphosphate = 5-phospho-alpha-D-ribose 1-diphosphate + anthranilate. The protein operates within amino-acid biosynthesis; L-tryptophan biosynthesis; L-tryptophan from chorismate: step 2/5. In terms of biological role, catalyzes the transfer of the phosphoribosyl group of 5-phosphorylribose-1-pyrophosphate (PRPP) to anthranilate to yield N-(5'-phosphoribosyl)-anthranilate (PRA). The polypeptide is Anthranilate phosphoribosyltransferase (Prochlorococcus marinus (strain NATL2A)).